The following is a 548-amino-acid chain: 4-coumarate--CoA ligase CCL1 (548 aa).

ATP contacts are provided by residues 195 to 203, 337 to 342, D426, 438 to 441, and K532; these read SSGTTGLPK, QGYGMT, and IVDR. An SBD1 region spans residues 268 to 337; sequence EISKLLELIE…EKLPHAKLGQ (70 aa). Positions 338–405 are SBD2; sequence GYGMTEAGPV…IRGKQIMKGY (68 aa).

It belongs to the ATP-dependent AMP-binding enzyme family. In terms of tissue distribution, mostly expressed in glandular trichomes (lupulin glands) after flowering, and, to a lower extent, in stems, leaves, cones and flowers.

It localises to the cytoplasm. The enzyme catalyses (E)-4-coumarate + ATP + CoA = (E)-4-coumaroyl-CoA + AMP + diphosphate. The protein operates within secondary metabolite biosynthesis. Its function is as follows. Involved in the biosynthesis of prenylated phenolics natural products which contribute to the bitter taste of beer and display broad biological activities. Catalyzes the ligation of CoA on (E)-4-coumarate to produce (E)-4-coumaroyl-CoA. The polypeptide is 4-coumarate--CoA ligase CCL1 (Humulus lupulus (European hop)).